Consider the following 402-residue polypeptide: Tumor necrosis factor receptor superfamily member 11B (402 aa).

An N-terminal signal peptide occupies residues 1–21 (MNKLLCCALVFLDISIKWTTQ). 4 TNFR-Cys repeats span residues 24 to 62 (FPPKYLHYDPESSRQLMCDKCPPGTFLKQPCTARRKTVC), 64 to 105 (PCPD…NRVC), 106 to 142 (ECEEGRYLELEFCLKHRSCPPGFGVLHPGTPERNTVC), and 144 to 185 (RCPD…DNIC). 8 disulfide bridges follow: C41/C54, C44/C62, C65/C80, C83/C97, C87/C105, C107/C118, C124/C142, and C145/C160. N-linked (GlcNAc...) asparagine glycans are attached at residues N165 and N178. Residues C166 and C185 are joined by a disulfide bond. Death domains follow at residues 198-269 (IDMT…DMVK) and 270-365 (KIIQ…VIQS).

Homodimer. Interacts with TNFSF10 and TNFSF11. N-glycosylated. Contains sialic acid residues.

Its subcellular location is the secreted. Its function is as follows. Acts as a decoy receptor for TNFSF11/RANKL and thereby neutralizes its function in osteoclastogenesis. Inhibits the activation of osteoclasts and promotes osteoclast apoptosis. Bone homeostasis seems to depend on the local ratio between TNFSF11 and TNFRSF11B. May also play a role in preventing arterial calcification. May act as decoy receptor for TNFSF10/TRAIL and protect against apoptosis. TNFSF10/TRAIL binding blocks the inhibition of osteoclastogenesis. The protein is Tumor necrosis factor receptor superfamily member 11B (TNFRSF11B) of Bos taurus (Bovine).